The chain runs to 593 residues: Vitamin H transporter (593 aa).

The Extracellular portion of the chain corresponds to methionine 1–leucine 121. Residues serine 32, serine 33, and serine 43 each carry the phosphoserine modification. A helical membrane pass occupies residues leucine 122 to valine 142. The Cytoplasmic segment spans residues aspartate 143–tyrosine 166. A helical transmembrane segment spans residues valine 167–leucine 187. At leucine 188–arginine 190 the chain is on the extracellular side. A helical membrane pass occupies residues phenylalanine 191 to cysteine 211. The Cytoplasmic portion of the chain corresponds to tyrosine 212–arginine 224. Residues phenylalanine 225–tryptophan 245 traverse the membrane as a helical segment. Topologically, residues tyrosine 246–tryptophan 291 are extracellular. Residues methionine 292–isoleucine 312 traverse the membrane as a helical segment. At proline 313 to lysine 361 the chain is on the cytoplasmic side. The helical transmembrane segment at valine 362–methionine 382 threads the bilayer. Over threonine 383–serine 408 the chain is Extracellular. The chain crosses the membrane as a helical span at residues valine 409 to phenylalanine 429. Topologically, residues arginine 430–lysine 432 are cytoplasmic. A helical membrane pass occupies residues tryptophan 433–tryptophan 453. Residues aspartate 454–lysine 460 lie on the Extracellular side of the membrane. Residues tryptophan 461–isoleucine 481 traverse the membrane as a helical segment. Over asparagine 482–lysine 492 the chain is Cytoplasmic. Residues alanine 493–leucine 513 traverse the membrane as a helical segment. Residues alanine 514 to glycine 526 are Extracellular-facing. A helical transmembrane segment spans residues tyrosine 527 to phenylalanine 547. Residues tyrosine 548–serine 593 lie on the Cytoplasmic side of the membrane.

Belongs to the major facilitator superfamily. Allantoate permease family.

The protein localises to the cell membrane. Involved in uptake of biotin with the concomitant entry of protons. The protein is Vitamin H transporter (VHT1) of Saccharomyces cerevisiae (strain ATCC 204508 / S288c) (Baker's yeast).